The following is a 578-amino-acid chain: Probable methylcrotonoyl-CoA carboxylase beta chain, mitochondrial (578 aa).

A mitochondrion-targeting transit peptide spans 1–29 (MIRLNWLFRSSSVLLRSQVRLLHVGDANV). The CoA carboxyltransferase N-terminal domain maps to 48-305 (MASLVGDLRN…SATNSYNDQL (258 aa)). The interval 48 to 570 (MASLVGDLRN…KAALNNAGQE (523 aa)) is carboxyltransferase. The CoA carboxyltransferase C-terminal domain occupies 321-570 (AVEEPRYDAE…KAALNNAGQE (250 aa)). Positions 355 to 388 (DGSRFTEFKKLYGETLVCGFAKLYGHTVGIVGNN) are acyl-CoA binding.

The protein belongs to the AccD/PCCB family. As to expression, expressed in third instar larval ring gland (lateral and medial secretory cells and corpus cardiacum cells) and CNS.

It is found in the mitochondrion matrix. It carries out the reaction 3-methylbut-2-enoyl-CoA + hydrogencarbonate + ATP = 3-methyl-(2E)-glutaconyl-CoA + ADP + phosphate + H(+). The protein operates within amino-acid degradation; L-leucine degradation; (S)-3-hydroxy-3-methylglutaryl-CoA from 3-isovaleryl-CoA: step 2/3. In terms of biological role, carboxyltransferase subunit of the 3-methylcrotonyl-CoA carboxylase, an enzyme that catalyzes the conversion of 3-methylcrotonyl-CoA to 3-methylglutaconyl-CoA, a critical step for leucine and isovaleric acid catabolism. Vital for adult survival. This is Probable methylcrotonoyl-CoA carboxylase beta chain, mitochondrial from Drosophila melanogaster (Fruit fly).